Here is a 909-residue protein sequence, read N- to C-terminus: Protein translocase subunit SecA (909 aa).

Residues Gln85, 103–107 (GEGKT), and Asp512 contribute to the ATP site. Positions 866 to 899 (HETSATGGEEEINKPVVKGKKIGRNDPCPCGSGK) are disordered. Cys893, Cys895, Cys904, and Cys905 together coordinate Zn(2+).

The protein belongs to the SecA family. Monomer and homodimer. Part of the essential Sec protein translocation apparatus which comprises SecA, SecYEG and auxiliary proteins SecDF. Other proteins may also be involved. Zn(2+) is required as a cofactor.

It is found in the cell membrane. The protein resides in the cytoplasm. It carries out the reaction ATP + H2O + cellular proteinSide 1 = ADP + phosphate + cellular proteinSide 2.. Part of the Sec protein translocase complex. Interacts with the SecYEG preprotein conducting channel. Has a central role in coupling the hydrolysis of ATP to the transfer of proteins into and across the cell membrane, serving as an ATP-driven molecular motor driving the stepwise translocation of polypeptide chains across the membrane. The protein is Protein translocase subunit SecA of Finegoldia magna (strain ATCC 29328 / DSM 20472 / WAL 2508) (Peptostreptococcus magnus).